The following is a 551-amino-acid chain: E3 ubiquitin-protein ligase HEL1 (551 aa).

The TRIAD supradomain stretch occupies residues 175 to 388 (NDFTCIICCD…KNFFQCTMYK (214 aa)). Zn(2+)-binding residues include Cys-179, Cys-182, Cys-200, Cys-203, Cys-301, Cys-304, His-309, Cys-314, Cys-341, and Cys-344. Residues 179–225 (CIICCDKKDTETFALECGHEYCINCYRHYIKDKLHEGNIITCMDCSL) form an RING-type 1 zinc finger. The IBR-type zinc-finger motif lies at 242–314 (SKLMDSSIKS…GFEVHSPADC (73 aa)). The segment at 341 to 370 (CPKCSVNIEKNGGCNHMVCSSCKYEFCWIC) adopts an RING-type 2; atypical zinc-finger fold. Cys-354 is a catalytic residue. Residues Cys-359, Cys-362, Cys-367, Cys-370, His-377, and Cys-384 each contribute to the Zn(2+) site.

Belongs to the RBR family. As to quaternary structure, interacts with the E2 ubiquitin-conjugating enzyme UBC4 and histones H3 and H4.

It carries out the reaction [E2 ubiquitin-conjugating enzyme]-S-ubiquitinyl-L-cysteine + [acceptor protein]-L-lysine = [E2 ubiquitin-conjugating enzyme]-L-cysteine + [acceptor protein]-N(6)-ubiquitinyl-L-lysine.. It functions in the pathway protein modification; protein ubiquitination. Its function is as follows. Probable ubiquitin-protein ligase involved in the degradation-related ubiquitination of histones. Contributes to the post-translational regulation of histone protein levels by polyubiquitination of excess histones for subsequent degradation. The polypeptide is E3 ubiquitin-protein ligase HEL1 (Saccharomyces cerevisiae (strain ATCC 204508 / S288c) (Baker's yeast)).